We begin with the raw amino-acid sequence, 691 residues long: Putative calcium up-regulated protein I (691 aa).

A Ricin B-type lectin domain is found at 47 to 174 (SNCYLKEKPQ…NYTSQIWTYN (128 aa)).

The protein belongs to the cup family.

In Dictyostelium discoideum (Social amoeba), this protein is Putative calcium up-regulated protein I (cupI).